We begin with the raw amino-acid sequence, 312 residues long: 1-phosphofructokinase (312 aa).

ATP contacts are provided by residues 223–228 and 254–255; these read SLGAEG and GD. Asp255 (proton acceptor) is an active-site residue.

This sequence belongs to the carbohydrate kinase PfkB family.

The enzyme catalyses beta-D-fructose 1-phosphate + ATP = beta-D-fructose 1,6-bisphosphate + ADP + H(+). Functionally, catalyzes the ATP-dependent phosphorylation of fructose-l-phosphate to fructose-l,6-bisphosphate. This Escherichia coli O157:H7 protein is 1-phosphofructokinase (fruK).